We begin with the raw amino-acid sequence, 247 residues long: 3-oxoacyl-[acyl-carrier-protein] reductase FabG (247 aa).

Residues 12–15 (GASR), Thr-37, 62–63 (DV), and Asn-89 contribute to the NADP(+) site. Ser-141 is a substrate binding site. Tyr-154 serves as the catalytic Proton acceptor. NADP(+) contacts are provided by residues 154 to 158 (YAAAK) and Ile-187.

Belongs to the short-chain dehydrogenases/reductases (SDR) family. In terms of assembly, homotetramer.

The catalysed reaction is a (3R)-hydroxyacyl-[ACP] + NADP(+) = a 3-oxoacyl-[ACP] + NADPH + H(+). Its pathway is lipid metabolism; fatty acid biosynthesis. Its function is as follows. Catalyzes the NADPH-dependent reduction of beta-ketoacyl-ACP substrates to beta-hydroxyacyl-ACP products, the first reductive step in the elongation cycle of fatty acid biosynthesis. The sequence is that of 3-oxoacyl-[acyl-carrier-protein] reductase FabG (fabG) from Pseudomonas aeruginosa (strain ATCC 15692 / DSM 22644 / CIP 104116 / JCM 14847 / LMG 12228 / 1C / PRS 101 / PAO1).